The primary structure comprises 820 residues: Ribosome biogenesis protein ERB1 (820 aa).

The disordered stretch occupies residues 1 to 111 (MVRSRSNSVK…SDAGDDEVDP (111 aa)). Residues 9 to 19 (VKKDLKRKVDE) are compositionally biased toward basic and acidic residues. Over residues 20–48 (PVDVQDEFDVEGLIDEGDSDDEDEAEQEV) the composition is skewed to acidic residues. The segment covering 53 to 64 (VTKDKKNTSKTE) has biased composition (basic and acidic residues). Residues 65–110 (NEEDADDESDSDAELEALIGEEEDLSGSELEDELAYFSDAGDDEVD) are compositionally biased toward acidic residues. The required for interaction with NOP7 stretch occupies residues 282-395 (RFIPSKHEAK…LRHVPGYSES (114 aa)). The tract at residues 395-431 (SVRERFERSLDLYLAPRVRKNKLNIDPDSLIPDLPSP) is required for interaction with YTM1. 2 WD repeats span residues 447 to 486 (GHKG…ELYR) and 495 to 535 (AQDD…FDIE). The tract at residues 545-585 (GWGFAEGGREQQDIDTKGLDDDADSDSDDETGHVKKKSPPA) is disordered. Basic and acidic residues predominate over residues 551-564 (GGREQQDIDTKGLD). WD repeat units lie at residues 604-646 (TATK…SQSP), 649-687 (KSKG…MAKK), 690-729 (PGAR…KPYK), 733-773 (YHEK…DMMT), and 789-820 (KSGL…LWTT).

This sequence belongs to the WD repeat BOP1/ERB1 family. In terms of assembly, component of the NOP7 complex, composed of ERB1, NOP7 and YTM1. The complex is held together by ERB1, which interacts with NOP7 via its N-terminal domain and with YTM1 via a high-affinity interaction between the seven-bladed beta-propeller domains of the 2 proteins. The NOP7 complex associates with the 66S pre-ribosome.

It localises to the nucleus. Its subcellular location is the nucleolus. The protein localises to the nucleoplasm. Functionally, component of the NOP7 complex, which is required for maturation of the 25S and 5.8S ribosomal RNAs and formation of the 60S ribosome. The protein is Ribosome biogenesis protein ERB1 of Yarrowia lipolytica (strain CLIB 122 / E 150) (Yeast).